The chain runs to 186 residues: Peptidyl-tRNA hydrolase (186 aa).

Tyr-14 is a tRNA binding site. Residue His-19 is the Proton acceptor of the active site. TRNA-binding residues include Tyr-61, Asn-63, and Asn-107.

This sequence belongs to the PTH family. As to quaternary structure, monomer.

Its subcellular location is the cytoplasm. The enzyme catalyses an N-acyl-L-alpha-aminoacyl-tRNA + H2O = an N-acyl-L-amino acid + a tRNA + H(+). Its function is as follows. Hydrolyzes ribosome-free peptidyl-tRNAs (with 1 or more amino acids incorporated), which drop off the ribosome during protein synthesis, or as a result of ribosome stalling. In terms of biological role, catalyzes the release of premature peptidyl moieties from peptidyl-tRNA molecules trapped in stalled 50S ribosomal subunits, and thus maintains levels of free tRNAs and 50S ribosomes. The polypeptide is Peptidyl-tRNA hydrolase (Helicobacter pylori (strain G27)).